The primary structure comprises 473 residues: Ribulose bisphosphate carboxylase large chain 1 (473 aa).

Residues Asn-116 and Thr-166 each coordinate substrate. The active-site Proton acceptor is the Lys-168. Lys-170 lines the substrate pocket. Positions 194, 196, and 197 each coordinate Mg(2+). Lys-194 carries the N6-carboxylysine modification. Residue His-287 is the Proton acceptor of the active site. Substrate is bound by residues Arg-288, His-320, and Ser-372.

The protein belongs to the RuBisCO large chain family. Type I subfamily. In terms of assembly, heterohexadecamer of 8 large chains and 8 small chains. It depends on Mg(2+) as a cofactor.

The enzyme catalyses 2 (2R)-3-phosphoglycerate + 2 H(+) = D-ribulose 1,5-bisphosphate + CO2 + H2O. The catalysed reaction is D-ribulose 1,5-bisphosphate + O2 = 2-phosphoglycolate + (2R)-3-phosphoglycerate + 2 H(+). Functionally, ruBisCO catalyzes two reactions: the carboxylation of D-ribulose 1,5-bisphosphate, the primary event in carbon dioxide fixation, as well as the oxidative fragmentation of the pentose substrate. Both reactions occur simultaneously and in competition at the same active site. The protein is Ribulose bisphosphate carboxylase large chain 1 of Acidithiobacillus ferrooxidans (strain ATCC 23270 / DSM 14882 / CIP 104768 / NCIMB 8455) (Ferrobacillus ferrooxidans (strain ATCC 23270)).